Consider the following 178-residue polypeptide: Protein modigliani (178 aa).

As to quaternary structure, probably homodimerizes. Component of the MTV complex, composed of moi/modigliani, tea and ver/verrocchio. Interacts with ver/verrochio and tea (via C-terminus); the interactions are direct and require fully intact moi/modigliani and ver/verrocchio. The MTV complex is recruited to telomeres by the HipHop-HOAP complex, consisting of HipHop, cav/HOAP and Su(var)205/HP1 to form the terminin telomere-capping complex. Interacts with cav/HOAP and Su(var)205/HP1; the interactions are direct. Probably interacts with peo (via N-terminus and UBC domain).

It localises to the nucleus. It is found in the chromosome. The protein localises to the telomere. Part of the MTV complex that associates with the HipHop-HOAP complex to form the terminin telomere-capping complex involved in telomere maintenance and prevention of telomere fusion. Potentially functions downstream of mei-41/ATR. As part of the MTV complex binds single stranded DNA in a sequence-independent manner, protecting it from degradation. The chain is Protein modigliani from Drosophila melanogaster (Fruit fly).